Consider the following 277-residue polypeptide: Carbonyl reductase [NADPH] 3 (277 aa).

Serine 2 carries the N-acetylserine modification. NADP(+) is bound by residues 10–34 (VTGANRGIGLAIARELCRQFSGDVV), 38–42 (RDVAR), 63–64 (DI), and asparagine 90. Phosphoserine is present on serine 30. Residue serine 140 coordinates substrate. The active-site Proton acceptor is the tyrosine 194. NADP(+) is bound by residues 194-198 (YGVSK) and aspartate 239.

This sequence belongs to the short-chain dehydrogenases/reductases (SDR) family. In terms of tissue distribution, detected in ovary, pancreas, intestine, colon, kidney, brain, thymus, lung, heart, liver, spleen, leukocyte, prostate and testis.

The protein localises to the cytoplasm. The enzyme catalyses a secondary alcohol + NADP(+) = a ketone + NADPH + H(+). It carries out the reaction a quinone + NADPH + H(+) = a quinol + NADP(+). Functionally, catalyzes the NADPH-dependent reduction of carbonyl compounds to their corresponding alcohols. Has low NADPH-dependent oxidoreductase activity. Acts on several orthoquinones, acts as well on non-quinone compounds, such as isatin or on the anticancer drug oracin. Best substrates for CBR3 is 1,2- naphthoquinone, hence could play a role in protection against cytotoxicity of exogenous quinones. Exerts activity toward ortho-quinones but not paraquinones. No endogenous substrate for CBR3 except isatin has been identified. This chain is Carbonyl reductase [NADPH] 3, found in Homo sapiens (Human).